A 323-amino-acid chain; its full sequence is Phospho-N-acetylmuramoyl-pentapeptide-transferase (323 aa).

9 helical membrane-spanning segments follow: residues 3-23, 52-72, 77-97, 121-141, 145-165, 175-195, 200-220, 226-248, and 301-321; these read NILLPLLGGFIITAAFMPALI, MGGLLFIVAIAVMTLLTSWVL, MLPTTWILIFILVLYGALGMW, IVGALILFWVYTHEQLPMALH, IGNWHMSGWYAVFVILWLVGF, LDGLVSGLASIAFAAYGIVAW, INIAIFCFAVVGSLLGFLIFN, IFMGDTGSLALGGALAAVSILLH, and IDLTFWGIGLVTALSGVWVIL.

The protein belongs to the glycosyltransferase 4 family. MraY subfamily. It depends on Mg(2+) as a cofactor.

It is found in the cell membrane. The enzyme catalyses UDP-N-acetyl-alpha-D-muramoyl-L-alanyl-gamma-D-glutamyl-L-lysyl-D-alanyl-D-alanine + di-trans,octa-cis-undecaprenyl phosphate = Mur2Ac(oyl-L-Ala-gamma-D-Glu-L-Lys-D-Ala-D-Ala)-di-trans,octa-cis-undecaprenyl diphosphate + UMP. Its pathway is cell wall biogenesis; peptidoglycan biosynthesis. Functionally, catalyzes the initial step of the lipid cycle reactions in the biosynthesis of the cell wall peptidoglycan: transfers peptidoglycan precursor phospho-MurNAc-pentapeptide from UDP-MurNAc-pentapeptide onto the lipid carrier undecaprenyl phosphate, yielding undecaprenyl-pyrophosphoryl-MurNAc-pentapeptide, known as lipid I. The protein is Phospho-N-acetylmuramoyl-pentapeptide-transferase of Levilactobacillus brevis (strain ATCC 367 / BCRC 12310 / CIP 105137 / JCM 1170 / LMG 11437 / NCIMB 947 / NCTC 947) (Lactobacillus brevis).